The chain runs to 99 residues: Plastocyanin (99 aa).

The region spanning 1 to 99 is the Plastocyanin-like domain; the sequence is VEVLMGGSGG…IGMSGIVTVN (99 aa). Cu cation-binding residues include His37, Cys84, His87, and Met92.

Belongs to the plastocyanin family. Requires Cu(2+) as cofactor.

Its subcellular location is the plastid. It localises to the chloroplast thylakoid membrane. In terms of biological role, participates in electron transfer between P700 and the cytochrome b6-f complex in photosystem I. The protein is Plastocyanin (PETE) of Ginkgo biloba (Ginkgo).